We begin with the raw amino-acid sequence, 309 residues long: WD repeat domain phosphoinositide-interacting protein 4 (309 aa).

One copy of the WD 1 repeat lies at 4 to 42 (QPLRGVTSLHFNQDQSCFCCAMETGVRIYNVEPLMEKGH). A L/FRRG motif motif is present at residues 180 to 183 (LRRG). Residues 184 to 223 (TDPATLYCINFSHDSSFLCASSDKGTVHIFALKDTRLNRR) form a WD 2 repeat.

The protein belongs to the WD repeat PROPPIN family. Interacts with WIPI1. Interacts with WIPI2. Interacts with ATG2A and ATG2B. Interacts with ULK1. May interact with the PRKAA1, PRKAA2, PRKAB1 and PRKAG1 subunits of the AMPK kinase. May interact with NUDC.

It localises to the preautophagosomal structure. It is found in the cytoplasm. Functionally, component of the autophagy machinery that controls the major intracellular degradation process by which cytoplasmic materials are packaged into autophagosomes and delivered to lysosomes for degradation. Binds phosphatidylinositol 3-phosphate (PtdIns3P). Activated by the STK11/AMPK signaling pathway upon starvation, WDR45 is involved in autophagosome assembly downstream of WIPI2, regulating the size of forming autophagosomes. Together with WIPI1, promotes ATG2 (ATG2A or ATG2B)-mediated lipid transfer by enhancing ATG2-association with phosphatidylinositol 3-monophosphate (PI3P)-containing membranes. Probably recruited to membranes through its PtdIns3P activity. This Rattus norvegicus (Rat) protein is WD repeat domain phosphoinositide-interacting protein 4 (Wdr45).